We begin with the raw amino-acid sequence, 628 residues long: 1-deoxy-D-xylulose-5-phosphate synthase (628 aa).

Thiamine diphosphate-binding positions include H77 and 118–120; that span reads GHS. D150 serves as a coordination point for Mg(2+). Residues 151-152, N180, Y288, and E369 contribute to the thiamine diphosphate site; that span reads GA. N180 is a binding site for Mg(2+).

The protein belongs to the transketolase family. DXPS subfamily. As to quaternary structure, homodimer. The cofactor is Mg(2+). Requires thiamine diphosphate as cofactor.

The enzyme catalyses D-glyceraldehyde 3-phosphate + pyruvate + H(+) = 1-deoxy-D-xylulose 5-phosphate + CO2. It functions in the pathway metabolic intermediate biosynthesis; 1-deoxy-D-xylulose 5-phosphate biosynthesis; 1-deoxy-D-xylulose 5-phosphate from D-glyceraldehyde 3-phosphate and pyruvate: step 1/1. Catalyzes the acyloin condensation reaction between C atoms 2 and 3 of pyruvate and glyceraldehyde 3-phosphate to yield 1-deoxy-D-xylulose-5-phosphate (DXP). The sequence is that of 1-deoxy-D-xylulose-5-phosphate synthase from Aquifex aeolicus (strain VF5).